We begin with the raw amino-acid sequence, 687 residues long: Glycine--tRNA ligase beta subunit (687 aa).

The protein belongs to the class-II aminoacyl-tRNA synthetase family. Tetramer of two alpha and two beta subunits.

The protein resides in the cytoplasm. The catalysed reaction is tRNA(Gly) + glycine + ATP = glycyl-tRNA(Gly) + AMP + diphosphate. The sequence is that of Glycine--tRNA ligase beta subunit from Geobacter sulfurreducens (strain ATCC 51573 / DSM 12127 / PCA).